The chain runs to 204 residues: Leucyl/phenylalanyl-tRNA--protein transferase (204 aa).

This sequence belongs to the L/F-transferase family.

The protein localises to the cytoplasm. The enzyme catalyses N-terminal L-lysyl-[protein] + L-leucyl-tRNA(Leu) = N-terminal L-leucyl-L-lysyl-[protein] + tRNA(Leu) + H(+). The catalysed reaction is N-terminal L-arginyl-[protein] + L-leucyl-tRNA(Leu) = N-terminal L-leucyl-L-arginyl-[protein] + tRNA(Leu) + H(+). It catalyses the reaction L-phenylalanyl-tRNA(Phe) + an N-terminal L-alpha-aminoacyl-[protein] = an N-terminal L-phenylalanyl-L-alpha-aminoacyl-[protein] + tRNA(Phe). In terms of biological role, functions in the N-end rule pathway of protein degradation where it conjugates Leu, Phe and, less efficiently, Met from aminoacyl-tRNAs to the N-termini of proteins containing an N-terminal arginine or lysine. The protein is Leucyl/phenylalanyl-tRNA--protein transferase of Sinorhizobium medicae (strain WSM419) (Ensifer medicae).